Here is a 666-residue protein sequence, read N- to C-terminus: DNA mismatch repair protein MutL (666 aa).

It belongs to the DNA mismatch repair MutL/HexB family.

This protein is involved in the repair of mismatches in DNA. It is required for dam-dependent methyl-directed DNA mismatch repair. May act as a 'molecular matchmaker', a protein that promotes the formation of a stable complex between two or more DNA-binding proteins in an ATP-dependent manner without itself being part of a final effector complex. In Clostridium botulinum (strain ATCC 19397 / Type A), this protein is DNA mismatch repair protein MutL.